A 342-amino-acid polypeptide reads, in one-letter code: Probable allantoicase (342 aa).

The protein belongs to the allantoicase family.

The enzyme catalyses allantoate + H2O = (S)-ureidoglycolate + urea. It functions in the pathway nitrogen metabolism; (S)-allantoin degradation; (S)-ureidoglycolate from allantoate (aminidohydrolase route): step 1/1. Functionally, utilization of purines as secondary nitrogen sources, when primary sources are limiting. In Schizosaccharomyces pombe (strain 972 / ATCC 24843) (Fission yeast), this protein is Probable allantoicase.